The sequence spans 572 residues: Phospholipase B-like protein B (572 aa).

Residues 1 to 28 (MNKLKSNFILNIVILFTILIFNINFINC) form the signal peptide. 6 N-linked (GlcNAc...) asparagine glycosylation sites follow: Asn-73, Asn-138, Asn-219, Asn-427, Asn-544, and Asn-564.

Belongs to the phospholipase B-like family.

It is found in the secreted. In terms of biological role, probable phospholipase. The protein is Phospholipase B-like protein B (plbB) of Dictyostelium discoideum (Social amoeba).